The primary structure comprises 330 residues: G-protein coupled receptor 157 (330 aa).

Topologically, residues 1-15 (MPTPAPPTELLPWER) are extracellular. Residues 16-36 (AVVLLSCVLSALGSGLLVATH) form a helical membrane-spanning segment. The Cytoplasmic portion of the chain corresponds to 37–48 (ALWPDLRSRARR). Residues 49–69 (LLLFLSLADLLSAASYFYGVL) traverse the membrane as a helical segment. At 70–87 (QDFAGTSWDCVLQGALST) the chain is on the extracellular side. The chain crosses the membrane as a helical span at residues 88 to 108 (FANTSSFFWTVAIALYLYLNI). At 109–119 (VRATRGPCTDH) the chain is on the cytoplasmic side. A helical transmembrane segment spans residues 120–140 (LVWAFHLISWGVPLAITVAAV). Topologically, residues 141–166 (CLKKIGYDASDVSVGWCWINLEAEDR) are extracellular. Residues 167–187 (VLWMLLTGKLWEMLAYILLPL) traverse the membrane as a helical segment. Residues 188–227 (LYLLVRKHINRAHQALSEYRPIWEGRQLQRGSPTSMADKK) are Cytoplasmic-facing. Residues 228 to 250 (LILIPFIFICLRVWSTVRFVLTL) form a helical membrane-spanning segment. At 251-259 (CGSPVVQAP) the chain is on the extracellular side. A helical membrane pass occupies residues 260–282 (VLVVLHGIGNTFQGGANCIMFVL). Over 283–330 (CTRAVRTRLFSLCCCYPRPPTQNPPGASIPPKMGESQESRRTPEVPST) the chain is Cytoplasmic. The disordered stretch occupies residues 303 to 330 (TQNPPGASIPPKMGESQESRRTPEVPST). The span at 317 to 330 (ESQESRRTPEVPST) shows a compositional bias: basic and acidic residues.

This sequence belongs to the G-protein coupled receptor 2 family.

It is found in the cell projection. The protein localises to the cilium membrane. Its function is as follows. Orphan receptor that promotes neuronal differentiation of radial glial progenitors (RGPs). The activity of this receptor is mediated by a G(q)-protein that activates a phosphatidylinositol-calcium second messenger. This Rattus norvegicus (Rat) protein is G-protein coupled receptor 157 (Gpr157).